The sequence spans 534 residues: Probable alpha-galactosidase A (534 aa).

The signal sequence occupies residues 1-25; the sequence is MRLITRWIPLANALASTMPVQVVAS. Residues Cys-47 and Cys-79 are joined by a disulfide bond. N-linked (GlcNAc...) asparagine glycosylation is found at Asn-50, Asn-88, Asn-94, and Asn-124. Cys-127 and Cys-157 are oxidised to a cystine. The active-site Nucleophile is Asp-155. The N-linked (GlcNAc...) asparagine glycan is linked to Asn-204. Asp-213 functions as the Proton donor in the catalytic mechanism. The region spanning 413 to 534 is the Ricin B-type lectin domain; it reads CSQVIPTGLI…GLPAGVHVAL (122 aa). Cysteines 430 and 443 form a disulfide. Asn-444 carries N-linked (GlcNAc...) asparagine glycosylation. A disulfide bridge links Cys-468 with Cys-481.

It belongs to the glycosyl hydrolase 27 family.

Its subcellular location is the secreted. The enzyme catalyses Hydrolysis of terminal, non-reducing alpha-D-galactose residues in alpha-D-galactosides, including galactose oligosaccharides, galactomannans and galactolipids.. Functionally, hydrolyzes a variety of simple alpha-D-galactoside as well as more complex molecules such as oligosaccharides and polysaccharides. This is Probable alpha-galactosidase A (aglA) from Aspergillus flavus (strain ATCC 200026 / FGSC A1120 / IAM 13836 / NRRL 3357 / JCM 12722 / SRRC 167).